Reading from the N-terminus, the 335-residue chain is Aliphatic sulfonates import ATP-binding protein SsuB (335 aa).

The ABC transporter domain maps to 74–293 (VRLTRVSKRY…ARASAAFAAL (220 aa)). 106–113 (GRSGCGKS) is a binding site for ATP. The disordered stretch occupies residues 308–335 (APAAPNAAGPEGASRGRAAPASGLRWAV).

It belongs to the ABC transporter superfamily. Aliphatic sulfonates importer (TC 3.A.1.17.2) family. As to quaternary structure, the complex is composed of two ATP-binding proteins (SsuB), two transmembrane proteins (SsuC) and a solute-binding protein (SsuA).

Its subcellular location is the cell inner membrane. The catalysed reaction is ATP + H2O + aliphatic sulfonate-[sulfonate-binding protein]Side 1 = ADP + phosphate + aliphatic sulfonateSide 2 + [sulfonate-binding protein]Side 1.. Functionally, part of the ABC transporter complex SsuABC involved in aliphatic sulfonates import. Responsible for energy coupling to the transport system. The chain is Aliphatic sulfonates import ATP-binding protein SsuB from Burkholderia mallei (strain ATCC 23344).